A 272-amino-acid chain; its full sequence is Bis(5'-nucleosyl)-tetraphosphatase, symmetrical (272 aa).

The protein belongs to the Ap4A hydrolase family.

It carries out the reaction P(1),P(4)-bis(5'-adenosyl) tetraphosphate + H2O = 2 ADP + 2 H(+). In terms of biological role, hydrolyzes diadenosine 5',5'''-P1,P4-tetraphosphate to yield ADP. This is Bis(5'-nucleosyl)-tetraphosphatase, symmetrical from Wigglesworthia glossinidia brevipalpis.